The sequence spans 374 residues: Flagellar P-ring protein (374 aa).

Residues 1-29 (MRRVRTTRLFQVACAAIVALASSAMSAHA) form the signal peptide.

The protein belongs to the FlgI family. In terms of assembly, the basal body constitutes a major portion of the flagellar organelle and consists of four rings (L,P,S, and M) mounted on a central rod.

The protein localises to the periplasm. Its subcellular location is the bacterial flagellum basal body. Functionally, assembles around the rod to form the L-ring and probably protects the motor/basal body from shearing forces during rotation. This is Flagellar P-ring protein from Bradyrhizobium sp. (strain BTAi1 / ATCC BAA-1182).